Reading from the N-terminus, the 118-residue chain is UPF0342 protein BpOF4_11360 (118 aa).

The protein belongs to the UPF0342 family.

The protein is UPF0342 protein BpOF4_11360 of Alkalihalophilus pseudofirmus (strain ATCC BAA-2126 / JCM 17055 / OF4) (Bacillus pseudofirmus).